The primary structure comprises 306 residues: Putative transcriptional regulator (306 aa).

Positions 1 to 61 constitute an HTH lysR-type domain; sequence MIKRNLNDLL…TRTTRSVSPT (61 aa). Residues 21-40 constitute a DNA-binding region (H-T-H motif); the sequence is FTRAAAQLGVTQSALSQSIS.

Belongs to the LysR transcriptional regulatory family.

Functionally, may have a role in the regulation of oprD expression. The protein is Putative transcriptional regulator of Pseudomonas aeruginosa (strain ATCC 15692 / DSM 22644 / CIP 104116 / JCM 14847 / LMG 12228 / 1C / PRS 101 / PAO1).